Here is a 362-residue protein sequence, read N- to C-terminus: 3-dehydroquinate synthase (362 aa).

NAD(+) is bound by residues 70 to 75 (DGEKYK), 104 to 108 (GVIGD), 128 to 129 (TT), Lys141, Lys150, and 168 to 171 (TLNT). Residues Glu183, His246, and His263 each coordinate Zn(2+).

It belongs to the sugar phosphate cyclases superfamily. Dehydroquinate synthase family. NAD(+) serves as cofactor. It depends on Co(2+) as a cofactor. Zn(2+) is required as a cofactor.

Its subcellular location is the cytoplasm. The enzyme catalyses 7-phospho-2-dehydro-3-deoxy-D-arabino-heptonate = 3-dehydroquinate + phosphate. It participates in metabolic intermediate biosynthesis; chorismate biosynthesis; chorismate from D-erythrose 4-phosphate and phosphoenolpyruvate: step 2/7. Functionally, catalyzes the conversion of 3-deoxy-D-arabino-heptulosonate 7-phosphate (DAHP) to dehydroquinate (DHQ). The protein is 3-dehydroquinate synthase of Haemophilus influenzae (strain ATCC 51907 / DSM 11121 / KW20 / Rd).